Reading from the N-terminus, the 142-residue chain is Large ribosomal subunit protein uL11 (142 aa).

Belongs to the universal ribosomal protein uL11 family. Part of the ribosomal stalk of the 50S ribosomal subunit. Interacts with L10 and the large rRNA to form the base of the stalk. L10 forms an elongated spine to which L12 dimers bind in a sequential fashion forming a multimeric L10(L12)X complex. In terms of processing, one or more lysine residues are methylated.

In terms of biological role, forms part of the ribosomal stalk which helps the ribosome interact with GTP-bound translation factors. In Citrobacter koseri (strain ATCC BAA-895 / CDC 4225-83 / SGSC4696), this protein is Large ribosomal subunit protein uL11.